The chain runs to 299 residues: Endonuclease 4 (299 aa).

A signal peptide spans 1–24 (MSSSLRQWFARVLVLTQLINGALC). Residues W25 and H30 each contribute to the a divalent metal cation site. Residue 25 to 30 (WGKEGH) coordinates substrate. The cysteines at positions 34 and 65 are disulfide-linked. 2 residues coordinate a divalent metal cation: D69 and H84. Residues 69-75 (DEIKHHW), 84-87 (HYVD), and 94-99 (NYEYCR) contribute to the substrate site. 3 disulfides stabilise this stretch: C93–C246, C101–C111, and C226–C233. Substrate contacts are provided by N118 and Y136. The N-linked (GlcNAc...) asparagine glycan is linked to N118. N-linked (GlcNAc...) asparagine glycosylation is present at N137. A divalent metal cation contacts are provided by H147, D151, H157, H181, and D185. The interval 147–196 (HFIGDIHQPLHVGFLGDEGGNTITVRWYRRKTNLHHVWDNMIIESALKTY) is substrate binding. 3 N-linked (GlcNAc...) asparagine glycosylation sites follow: N198, N211, and N229. Positions 284–299 (ATLNRIFSSKPKHAGS) are cleaved as a propeptide — removed in mature form.

Belongs to the nuclease type I family. As to quaternary structure, monomer. It depends on Mn(2+) as a cofactor. Ca(2+) serves as cofactor.

It carries out the reaction Endonucleolytic cleavage to 5'-phosphomononucleotide and 5'-phosphooligonucleotide end-products.. In terms of biological role, endonuclease that can use single-stranded RNA and DNA as substrates. In contradiction with PubMed:23620482, cannot hydrolyze single-stranded DNA and does not cleave mismatches. This is Endonuclease 4 from Arabidopsis thaliana (Mouse-ear cress).